Here is a 173-residue protein sequence, read N- to C-terminus: MIGFGWLEALLRVGRKLFVKPETQLYPEQKPKLYPRARGRIVLTRDPDGQERCVACNLCATVCPVGCIDLAKAVADDGRWYPEYFRVNFARCIFCGFCEDACPTAAIQLTPDYELSEWRRDALVYEKHDLLISGEGKVRGYRYWSVAGKAIPGKDKGEAEHEAPPVNLKGLLP.

4Fe-4S ferredoxin-type domains lie at 41 to 73 and 83 to 112; these read IVLT…LAKA and EYFR…LTPD. [4Fe-4S] cluster-binding residues include Cys-53, Cys-56, Cys-59, Cys-63, Cys-92, Cys-95, Cys-98, and Cys-102. Residues 153 to 163 are compositionally biased toward basic and acidic residues; that stretch reads GKDKGEAEHEA. The tract at residues 153 to 173 is disordered; the sequence is GKDKGEAEHEAPPVNLKGLLP.

The protein belongs to the complex I 23 kDa subunit family. As to quaternary structure, NDH-1 is composed of 14 different subunits. Subunits NuoA, H, J, K, L, M, N constitute the membrane sector of the complex. [4Fe-4S] cluster is required as a cofactor.

Its subcellular location is the cell inner membrane. It carries out the reaction a quinone + NADH + 5 H(+)(in) = a quinol + NAD(+) + 4 H(+)(out). Its function is as follows. NDH-1 shuttles electrons from NADH, via FMN and iron-sulfur (Fe-S) centers, to quinones in the respiratory chain. The immediate electron acceptor for the enzyme in this species is believed to be ubiquinone. Couples the redox reaction to proton translocation (for every two electrons transferred, four hydrogen ions are translocated across the cytoplasmic membrane), and thus conserves the redox energy in a proton gradient. This Rhodopseudomonas palustris (strain ATCC BAA-98 / CGA009) protein is NADH-quinone oxidoreductase subunit I 2.